Reading from the N-terminus, the 299-residue chain is Lysine exporter LysO (299 aa).

Transmembrane regions (helical) follow at residues 1–21, 31–51, 58–78, 109–129, 131–151, 169–189, 207–227, and 277–297; these read MFSG…IPLR, QLLS…LAFL, LLAI…CNIA, LKLC…LAFL, HATE…GIQL, IVAV…AFIL, SLSG…AAFF, and PAAI…IAFF.

It belongs to the LysO family.

Its subcellular location is the cell inner membrane. Mediates export of lysine. This Escherichia coli (strain K12) protein is Lysine exporter LysO.